The chain runs to 365 residues: Protein AC54 (365 aa).

As to quaternary structure, interacts with C42 and VP80. Interacts with protein 38K.

The protein resides in the virion. In terms of biological role, structural protein that participates in nucleocapsid assembly. Plays an essential role in the proper localization of the major capsid protein VP39, and the minor capsid protein 38K into the capsid assembly site. The polypeptide is Protein AC54 (AC54) (Lepidoptera (butterflies and moths)).